A 3081-amino-acid chain; its full sequence is Cilia- and flagella-associated protein 54 (3081 aa).

Disordered stretches follow at residues 542–579, 591–626, 910–942, 1406–1451, 1518–1586, 1636–1657, 2176–2210, 2229–2306, and 2776–2806; these read SGTA…AGGA, TQTA…QSSL, PPQP…GARK, ADAP…GITP, ESIL…YPVV, RRAA…EERP, GERT…LPEP, MASG…SQRA, and ARPV…SGDG. Positions 564-579 are enriched in low complexity; the sequence is GGSASPPNGSSGAGGA. Positions 1428-1449 are enriched in pro residues; that stretch reads MPPPVPDPSAAGPPPLTPPEGI. The segment covering 1538-1550 has biased composition (basic and acidic residues); it reads GGKDDKKKDDKAP. 3 stretches are compositionally biased toward low complexity: residues 1638-1648, 2181-2199, and 2240-2269; these read AALAASASTAG, APKP…AAAA, and EPSS…SPTG. Positions 2289 to 2301 are enriched in pro residues; sequence PEVPGPPPPPPPS. Positions 2776–2788 are enriched in low complexity; that stretch reads ARPVATSSSGARP. Residues 2796-2805 show a composition bias toward gly residues; sequence KPGAGGGSGD.

Belongs to the CFAP54 family. As to quaternary structure, part of the PDCP1 complex composed of CFAP46, CFAP54, CFAP74 and CFAP221; the PDCP1 complex binds calmodulin.

It is found in the cytoplasm. Its subcellular location is the cytoskeleton. The protein resides in the cilium axoneme. The protein is Cilia- and flagella-associated protein 54 of Chlamydomonas reinhardtii (Chlamydomonas smithii).